A 94-amino-acid chain; its full sequence is Acylphosphatase (94 aa).

One can recognise an Acylphosphatase-like domain in the interval 8–94 (TVHVIVKGKV…EKRYKHFAQL (87 aa)). Active-site residues include Arg23 and Asn41.

Belongs to the acylphosphatase family.

The enzyme catalyses an acyl phosphate + H2O = a carboxylate + phosphate + H(+). The polypeptide is Acylphosphatase (acyP) (Bordetella parapertussis (strain 12822 / ATCC BAA-587 / NCTC 13253)).